The sequence spans 81 residues: Short neurotoxin 1 (81 aa).

The signal sequence occupies residues Met1–Thr21. 4 disulfides stabilise this stretch: Cys24–Cys43, Cys38–Cys60, Cys62–Cys73, and Cys74–Cys79.

Belongs to the three-finger toxin family. Short-chain subfamily. Type I alpha-neurotoxin sub-subfamily. As to expression, expressed by the venom gland.

The protein resides in the secreted. Binds to muscle nicotinic acetylcholine receptor (nAChR) and inhibit acetylcholine from binding to the receptor, thereby impairing neuromuscular transmission. The polypeptide is Short neurotoxin 1 (Hydrophis peronii (Spiny-headed seasnake)).